The following is a 335-amino-acid chain: NmrA-like family domain-containing oxidoreductase ptmS (335 aa).

Residues 12-17 (GATGNQ), 39-43 (RDPNS), 60-61 (DG), 81-88 (INSDDPVF), lysine 139, and 163-166 (FLEN) contribute to the NADP(+) site. The interaction with ASS1 stretch occupies residues 161–206 (GYFLENFLFKQGAFIMGGFPWETDAEGYLTWKVPYWGGEEQIPFLS).

Belongs to the NmrA-type oxidoreductase family.

Its pathway is secondary metabolite biosynthesis. NmrA-like family domain-containing oxidoreductase; part of the gene cluster that mediates the biosynthesis of the indole diterpenes penitrems. The geranylgeranyl diphosphate (GGPP) synthase ptmG catalyzes the first step in penitrem biosynthesis via conversion of farnesyl pyrophosphate and isopentyl pyrophosphate into geranylgeranyl pyrophosphate (GGPP). Condensation of indole-3-glycerol phosphate with GGPP by the prenyl transferase ptmC then forms 3-geranylgeranylindole (3-GGI). Epoxidation by the FAD-dependent monooxygenase ptmM leads to a epoxidized-GGI that is substrate of the terpene cyclase ptmB for cyclization to yield paspaline. Paspaline is subsequently converted to 13-desoxypaxilline by the cytochrome P450 monooxygenase ptmP, the latter being then converted to paxilline by the cytochrome P450 monooxygenase ptmQ. Paxilline is converted to beta-paxitriol via C-10 ketoreduction by the short-chain dehydrogenase ptmH which can be monoprenylated at the C-20 by the indole diterpene prenyltransferase ptmD. A two-step elimination (acetylation and elimination) process performed by the O-acetyltransferase ptmV and ptmI leads to the production of the prenylated form of penijanthine. The FAD-linked oxidoreductase ptmO then converts the prenylated form of penijanthine into PC-M5 which is in turn transformed into PC-M4 by the aromatic dimethylallyltransferase ptmE. Five sequential oxidative transformations performed by the cytochrome P450 monooxygenases ptmK, ptmU, ptmL, ptmN and ptmJ yield the various penitrem compounds. PtmK, ptmU and ptmM are involved in the formation of the key bicyclic ring of penitrem C via the formation of the intermediates secopenitrem D and penitrem D. PtmL catalyzes the epoxidation of penitrem D and C to yield penitrem B and F, respectively. PtmJ catalyzes the last benzylic hydroxylation to convert penitrem B to prenitrem E and penitrem F to penitrem A. This Penicillium ochrochloron protein is NmrA-like family domain-containing oxidoreductase ptmS.